Here is a 441-residue protein sequence, read N- to C-terminus: L-seryl-tRNA(Sec) selenium transferase (441 aa).

Lysine 283 carries the N6-(pyridoxal phosphate)lysine modification.

It belongs to the SelA family. The cofactor is pyridoxal 5'-phosphate.

The protein resides in the cytoplasm. It carries out the reaction L-seryl-tRNA(Sec) + selenophosphate + H(+) = L-selenocysteinyl-tRNA(Sec) + phosphate. Its pathway is aminoacyl-tRNA biosynthesis; selenocysteinyl-tRNA(Sec) biosynthesis; selenocysteinyl-tRNA(Sec) from L-seryl-tRNA(Sec) (bacterial route): step 1/1. Functionally, converts seryl-tRNA(Sec) to selenocysteinyl-tRNA(Sec) required for selenoprotein biosynthesis. This Campylobacter concisus (strain 13826) protein is L-seryl-tRNA(Sec) selenium transferase.